The following is a 205-amino-acid chain: Urease accessory protein UreG (205 aa).

10-17 contributes to the GTP binding site; that stretch reads GPVGAGKT.

It belongs to the SIMIBI class G3E GTPase family. UreG subfamily. In terms of assembly, homodimer. UreD, UreF and UreG form a complex that acts as a GTP-hydrolysis-dependent molecular chaperone, activating the urease apoprotein by helping to assemble the nickel containing metallocenter of UreC. The UreE protein probably delivers the nickel.

Its subcellular location is the cytoplasm. Functionally, facilitates the functional incorporation of the urease nickel metallocenter. This process requires GTP hydrolysis, probably effectuated by UreG. This is Urease accessory protein UreG from Corynebacterium glutamicum (strain ATCC 13032 / DSM 20300 / JCM 1318 / BCRC 11384 / CCUG 27702 / LMG 3730 / NBRC 12168 / NCIMB 10025 / NRRL B-2784 / 534).